A 3948-amino-acid chain; its full sequence is MDASEPIAVIGSACRFPGGSDSPSKLWELLKEPRDLLSKVPPERYNADAFYHADATHHGTANVRHSYFLSEDPSSFDNNFFNIQPGEAEAIDPQQRLLMEVVYQGLCSAGQTIEGLRGSPTAVYVGVMCDDWSGIITRDLEVFPRYGATGMARSIMSNRISYFFDWHGPSMTIDTACSSSLVAVHQAIQTLRSGESEVAIAAGANLILTPGMYVAESKLSMLSPSGRSKMWDQDVDGYARGEGIAAVVLKPLSAAIRDNDHIDCIIRATGVNQDGRTPGLTMPSATAQADLIRSTYARAGLDINKAEDRPQFFHAHGTGTPAGDPREAEAISRAFYSPDNLSKDDKLYVGSIKTIIGHTEGTAGLASLIGTSLAIQSKVIPPNMHLDVLNPKVAPFYNNLEVPTSALEWPETRSGQPRRASINSFGFGGTNAHAIIEAYEPNAAARASGTLFSPLTFSASSEPSLRFLLMSYSEHLKLNPQIPLKDLAYSLQTRRSTLAYRVAITATTAENASKQLDAIVDGEQSSSINTRQLSKSSPKILGIFTGQGTQWPRMGARLLEESPFASKRLAELDDALSSLPADDRPTWTLREMILANADRSRVAEAAISQPLCTAVQVVLVDLLSQAGIQLSAVVGHSSGEIGAAYAAGLLTARDAIRVAYYRGLYAKLAQSPNGHKGAMMAVGTTFGDAADFCELEAFQGRIQIAAKNSPSSITLSGDKDAIIEAIEIFKDEGKFARQLKVDTAYHSSHVIPCAQPYLEAMNKCGIETATATKTQWYSSVHGGQIMHADSLTTSYWVDNMTSAVLFSPAVAQAWEEGGPYDLAIEVGPHPALKTPALDTIEAISEGRPPYTGVIARGKDDVQQFSTALGFIWTHLGPGSVAFEKFESVVSGSKDRPSFIQDLPNYPFDHAKQFMSMSRVSGWFNSIQEAPHPLLGRRCHDRETSHSVQWRNVLSHKEIPWLQGHQLQGQIIFPATGYISMAVEAIKILAEPSSLGLITIEDLNITRALAFVDEDASVETLFELRILSRSENEINAEFCCYSGIPHTHTATMSLNATAQIKASLGAPTSDKLSKTAVNDFDLRPVSVDRFYDFLARLGYNYSWPFRGTTSIRRKANFATGTLEDQSGSNWEDQLMVHPGMLDSSLQTTFAAFCCPGDERLWALHLPTSFRSITINPYFTSAGIGKQNSFTYQSVAIEERKASKVLVELNLLSEEAGDTFLQIEGMELVPFSPATPANDAVLFSRFDYRLAGPDGELTAAEYSFKPEDYKMALDCERIAFYYLRRLVETITPEERANTLLHYRHLVDWAAYVVPQVSNGGNPHIPASAQNDTHDDIQQLLKKHYERVDIRLLESVGENLPQVIRDSGNILEHMTKDGMLQDVYEQGFGLNLVNQYIAHMTAQIAHRYPRMNILEIGAGTGGSTREILPRLGSAFSTYTYTDVSGGFFDMAQDRFKDCADRMIFKTFDMNISPASQGFTEGAYDLVIASNVLHATLELEDMMKHVRSFLKPGGFLIILETVNNDCLRVGLPMGSLPGWWLGAEHGRQWGPTLTLPQWDSLLSKCGFGGIDTTTPPVHKILPGHVFCAQALDERIEILRSPMDHLATLPETKSTQLAIIGGQTLKVHRMCDQISRRLSSRYTSISRFHSIEEINETGLPESCTVLSLTELDEPLFTNMTSGKLDALKILWKQGGCILWITSGSRAENPHSYMTTGVGRCMRFEYPNITLQALDIKQISDRCPELIVDHLLRLEILDKWSKELRSDELLWSLEPEIYIEEDTTIIPRLYPYEAGNARYNAERRKVIKQADTKTDRVIFAECEGKWEIQHASPLHVARELPFSSDVSTRTIRITHLSPAIVNIVPGVSVMACAGVDTASNEPVIAVTHIAESPVSIPTGWCIHLDKLDPVKTLTAVSAVLIASSILERLAKGETLVVHDTPPHVRVALDKLAKTASVAIFYTSSDEAMSKLGARYIDRRSPLRVIKASLPKSASKFIDLSQDSDKNETSKVISMCLPWDYETIDTAHLFGLRNVAQQSAFEKDVSSSLKKAFEAFNSQLNTTASTNSVSLKETSNPIVDQVRFAILDCTDTPIQASVHPIDDGRIFRADKTFLLVGLTGELGQSLCKWMVEQGARNIVLTSRRPNVSEHFLDSFTETGATVKALPMDATNRSSIEACLETIKKTSPPIAGVVNGAMVLRDALFENMPYEDFIKVLNPKVLGSQLLDEMFYDTPLDFFIFFSSTTAVMGNSGQSNYIAGNMYMNALAAQRKKRGVAASSIDISSIIGLGYVERAEDLSEDTFIKMGYKPMSEQDLQKLFAEAIVLGRPDCHEVCELVTGVTPIYTDAQASDQYLKDVKFGHFLMERLDTQAYTGKTSTVPVRVQLADVKIRADAVAIIKESFIVRLRRVLAVGPDEVINEKVTLVEQGVDSLMAVEVRSWFIKELDVDIPVLKILGGMSVPDLVDECLDLLSPSILDVSSLEAGNAQAAKPTTVIPQTPTRVTPPESSQGTSDQDKPYTGSDSSHSPIGTPLTSWDRQDSSPPDKSDDAPNSTDILAPPRTFPNELSSIMSYGQAGFWFLNDYLVNKKAFNMAVMLKLTGPIRTQPLEKAVKLVAERHEILRTRFFWSEDGDERTPMQGINPPEMKLTVKTIADEEEAETELEHLHEENWELSSGEGVKVILLRLSDQVHFLLSGMHHIYLDGYSFSVFFKDLESAYINHRLPPLPVESQYRTFALQQRKAYEDGDLLKSIEYYRQNFPQEFAPIRPFPFASTGSRQLANEYSQHEAKLSIAPDVSAKIRQLARANRSTSFHVYLAALKILLFSLLPDAEELFIGIADANRGDKKFMGSLGFFLNVLPLRFQRGKPRSRVSSAIQSARDAVYGALQHSHLPFDVLLRELNVPRSDKHTPIFQVFMDYRQVVQERSSWGGCKLSDEKWCNAGTGYDIALEVTENINTDTLLSLRLQKQLYSEEHTQVLLRSYLNVLEYMIRGSDKTVDAAPAWSDHDLQVAVDAGKAPDYESKWQPTVSHQIDQVIQDNPDNIALKDGNGNVLTYVQMGNRIDAISKALIDAGTVQGTVVGVFQEPSTDWICSLLAIFKAGAVYVPLDLRNSIPRLASIVKASRPSVIITDSTTDEKVESIGAKFVTKLQLDGLNPMIHHDSIEINHAKAGYLAVILFTSGSTGEPKGLMMTHTNLLAYAEVSSKTFARADEDLVVLQQSPFSFDFSLDQTMAALTNGGCLYVVPASKRGDPDEISKIMVEESVTYTTATPSEYDLWLRYSAETLRQCTSWKYAFSGGEAMSYKLAREFGTLKLRNLHVFNGYGPAETTILSHRIDLKYTDPDLPDPLPAGYPLPGFAVCIVDNKMRPVPPGVQGEIVLGGPCIVSGYLNMPESTRDKFLPDTFFGTSGTVYRSGDRGRLCQDGLLFCDGRLEGNRMIKLRGFRVELDEVEKTIVSHSAGALSHAVVTVRGAEEGRYLVAHVVFAPDFPEKDREGTMRSLRQTLPLPPYMRPSAFQVLTDIPRTAHLKIDRKAIQDIPVQTTQSEVSEILTPSEQRLSELWRRVLPLDPGTLTHESDFFLIGGNSILLVKLQTLLRQVSWTAPKLVTLMGSSTLGAMAGVLEDCGPVNIIHWDEETKFPQDLQLTTPLRAAGKSTDITVLLTGSSGYLGRHLLSSLLNDHRVAQVHCLCRNLNDHQVVENPSSKVRVLQSDLAQHKLGLPDSTYSQLATEVDVIIHCAANRSFWDRYEALKADNLESTKELVKLVVSSGRAIPLHFLSSGAVIKYNSGLAPPADGGDGYVATKWASEAFLRQAVDSINLPVFSHRPVACESVQQSEEEDISILNELIQIVKLLGCRPSFDGVGGFVDVMPVNEVVEAIHKTGLNSQTEEGFCILEHKAHQRAYVKSFAAAVESDSDLSKIPCIPILEWFGRTKKAGFSYFLASQDLILGSQLFSRR.

Residues 4-438 (SEPIAVIGSA…GTNAHAIIEA (435 aa)) enclose the Ketosynthase family 3 (KS3) domain. Active-site for beta-ketoacyl synthase activity residues include C177, H316, and H358. The tract at residues 543–847 (IFTGQGTQWP…DTIEAISEGR (305 aa)) is malonyl-CoA:ACP transacylase (MAT) domain. An N-terminal hotdog fold region spans residues 931–1066 (HPLLGRRCHD…AQIKASLGAP (136 aa)). The tract at residues 931-1233 (HPLLGRRCHD…MELVPFSPAT (303 aa)) is dehydratase (DH) domain. In terms of domain architecture, PKS/mFAS DH spans 931–1235 (HPLLGRRCHD…LVPFSPATPA (305 aa)). H964 serves as the catalytic Proton acceptor; for dehydratase activity. Residues 1081 to 1235 (LRPVSVDRFY…LVPFSPATPA (155 aa)) form a C-terminal hotdog fold region. The active-site Proton donor; for dehydratase activity is D1141. The tract at residues 1376-1574 (MLQDVYEQGF…GIDTTTPPVH (199 aa)) is methyltransferase (MT) domain. The interval 2105–2277 (TFLLVGLTGE…VAASSIDISS (173 aa)) is ketoreductase (KR) domain. The Carrier 1 domain maps to 2389–2464 (AIIKESFIVR…DLVDECLDLL (76 aa)). S2424 is subject to O-(pantetheine 4'-phosphoryl)serine. A disordered region spans residues 2480-2553 (QAAKPTTVIP…NSTDILAPPR (74 aa)). Composition is skewed to polar residues over residues 2487–2505 (VIPQTPTRVTPPESSQGTS) and 2513–2528 (GSDSSHSPIGTPLTSW). Positions 2529 to 2541 (DRQDSSPPDKSDD) are enriched in basic and acidic residues. Positions 2564–2991 (SYGQAGFWFL…IRGSDKTVDA (428 aa)) are condensation (C) domain. The tract at residues 3026–3424 (QVIQDNPDNI…DGLLFCDGRL (399 aa)) is adenylation (A) (KR) domain. Positions 3540-3617 (EILTPSEQRL…AMAGVLEDCG (78 aa)) constitute a Carrier 2 domain. S3577 carries the post-translational modification O-(pantetheine 4'-phosphoryl)serine. The tract at residues 3653 to 3870 (LTGSSGYLGR…MPVNEVVEAI (218 aa)) is reductase (RED) domain.

This sequence in the C-terminal section; belongs to the NRP synthetase family.

It catalyses the reaction L-serine + 7 malonyl-CoA + acetyl-CoA + 2 S-adenosyl-L-methionine + ATP + 8 NADPH + 11 H(+) = (5S)-3-[(2E,6R,8E,10E,12E)-2,6-dimethyltetradeca-2,8,10,12-tetraenoyl]-5-(hydroxymethyl)pyrrolidine-2,4-dione + AMP + 2 S-adenosyl-L-homocysteine + 7 CO2 + diphosphate + 8 NADP(+) + 8 CoA + 6 H2O. The protein operates within mycotoxin biosynthesis. In terms of biological role, hybrid PKS-NRPS synthetase; part of the gene cluster that mediates the biosynthesis of equisetin, a trans-fused decalin-containing tetramic acid with antimicrobial activity. The PKS module of eqxS together with the enoylreductase eqxC catalyze the formation of the polyketide unit which is then conjugated to L-serine by the condensation domain of the eqxS NRPS module. Activity of the Dieckmann cyclase domain (RED) results in release of the Dieckmann product intermediate. Diels-Alderase eqx3 is involved in endo-selective Diels-Alder cycloaddition to form the decalin ring, leading to the production of N-desmethylequisetin also called trichosetin. Subsequent N-methylation is carried out by eqxD to give equisetin. The sequence is that of Equisetin synthetase eqxS from Fusarium heterosporum.